A 185-amino-acid polypeptide reads, in one-letter code: Ribosome-recycling factor (185 aa).

It belongs to the RRF family.

It localises to the cytoplasm. Responsible for the release of ribosomes from messenger RNA at the termination of protein biosynthesis. May increase the efficiency of translation by recycling ribosomes from one round of translation to another. This is Ribosome-recycling factor from Hamiltonella defensa subsp. Acyrthosiphon pisum (strain 5AT).